The chain runs to 237 residues: MLRKGVSFVGQAVQQTLKTQKNLRIQRFSATASQSSEEVNYEIRKDGKRLRGADYEEIVLTSIAGEDKTQIPKGAFDVLLKEYDDLQAESLDFKDKYQRSLAETENVRRRGIKQTDDAKVFAIQSFCKDLLEVSDILDIAVKSVKPEDLESGGKALKDLFEGVSMTRTVMAKTFAKHGLVTVDPTNEKFDPNLHEAVFQIPSANAKQPVGHIEVCTKIGYSLKERPIRPAQVGVVSK.

It belongs to the GrpE family. Probable component of the PAM complex at least composed of a mitochondrial HSP70 protein, GrpE, tim-44, tim-16 and tim-14/dnj-21.

The protein resides in the mitochondrion matrix. In terms of biological role, essential component of the PAM complex, a complex required for the translocation of transit peptide-containing proteins from the inner membrane into the mitochondrial matrix in an ATP-dependent manner. Seems to control the nucleotide-dependent binding of mitochondrial HSP70 to substrate proteins. The chain is GrpE protein homolog, mitochondrial from Caenorhabditis elegans.